A 1087-amino-acid chain; its full sequence is DNA polymerase II large subunit (1087 aa).

This sequence belongs to the archaeal DNA polymerase II family. Heterodimer of a large subunit and a small subunit.

It catalyses the reaction DNA(n) + a 2'-deoxyribonucleoside 5'-triphosphate = DNA(n+1) + diphosphate. The enzyme catalyses Exonucleolytic cleavage in the 3'- to 5'-direction to yield nucleoside 5'-phosphates.. In terms of biological role, possesses two activities: a DNA synthesis (polymerase) and an exonucleolytic activity that degrades single-stranded DNA in the 3'- to 5'-direction. Has a template-primer preference which is characteristic of a replicative DNA polymerase. This is DNA polymerase II large subunit (polC) from Thermoplasma acidophilum (strain ATCC 25905 / DSM 1728 / JCM 9062 / NBRC 15155 / AMRC-C165).